Reading from the N-terminus, the 488-residue chain is Bifunctional protein HldE (488 aa).

The segment at methionine 1–leucine 331 is ribokinase. Asparagine 206–glutamate 209 serves as a coordination point for ATP. The active site involves aspartate 276. The tract at residues phenylalanine 358 to asparagine 488 is cytidylyltransferase.

The protein in the N-terminal section; belongs to the carbohydrate kinase PfkB family. It in the C-terminal section; belongs to the cytidylyltransferase family. In terms of assembly, homodimer.

The catalysed reaction is D-glycero-beta-D-manno-heptose 7-phosphate + ATP = D-glycero-beta-D-manno-heptose 1,7-bisphosphate + ADP + H(+). It catalyses the reaction D-glycero-beta-D-manno-heptose 1-phosphate + ATP + H(+) = ADP-D-glycero-beta-D-manno-heptose + diphosphate. The protein operates within nucleotide-sugar biosynthesis; ADP-L-glycero-beta-D-manno-heptose biosynthesis; ADP-L-glycero-beta-D-manno-heptose from D-glycero-beta-D-manno-heptose 7-phosphate: step 1/4. It functions in the pathway nucleotide-sugar biosynthesis; ADP-L-glycero-beta-D-manno-heptose biosynthesis; ADP-L-glycero-beta-D-manno-heptose from D-glycero-beta-D-manno-heptose 7-phosphate: step 3/4. Its function is as follows. Catalyzes the phosphorylation of D-glycero-D-manno-heptose 7-phosphate at the C-1 position to selectively form D-glycero-beta-D-manno-heptose-1,7-bisphosphate. Functionally, catalyzes the ADP transfer from ATP to D-glycero-beta-D-manno-heptose 1-phosphate, yielding ADP-D-glycero-beta-D-manno-heptose. The protein is Bifunctional protein HldE of Paramagnetospirillum magneticum (strain ATCC 700264 / AMB-1) (Magnetospirillum magneticum).